Consider the following 125-residue polypeptide: Small ribosomal subunit protein uS12 (125 aa).

The residue at position 89 (Asp-89) is a 3-methylthioaspartic acid.

Belongs to the universal ribosomal protein uS12 family. In terms of assembly, part of the 30S ribosomal subunit. Contacts proteins S8 and S17. May interact with IF1 in the 30S initiation complex.

Its function is as follows. With S4 and S5 plays an important role in translational accuracy. Functionally, interacts with and stabilizes bases of the 16S rRNA that are involved in tRNA selection in the A site and with the mRNA backbone. Located at the interface of the 30S and 50S subunits, it traverses the body of the 30S subunit contacting proteins on the other side and probably holding the rRNA structure together. The combined cluster of proteins S8, S12 and S17 appears to hold together the shoulder and platform of the 30S subunit. This chain is Small ribosomal subunit protein uS12, found in Bordetella avium (strain 197N).